Here is a 102-residue protein sequence, read N- to C-terminus: Small ribosomal subunit protein uS10 (102 aa).

It belongs to the universal ribosomal protein uS10 family. As to quaternary structure, part of the 30S ribosomal subunit.

Involved in the binding of tRNA to the ribosomes. The chain is Small ribosomal subunit protein uS10 from Streptococcus pneumoniae (strain Taiwan19F-14).